The following is a 114-amino-acid chain: Evasin-1 (114 aa).

A signal peptide spans Met-1–Cys-20. 4 disulfide bridges follow: Cys-32-Cys-53, Cys-49-Cys-90, Cys-66-Cys-95, and Cys-85-Cys-104. Asn-39, Asn-54, and Asn-62 each carry an N-linked (GlcNAc...) asparagine glycan.

The protein belongs to the evasin C8 family. As to quaternary structure, monomer.

The protein localises to the secreted. Salivary chemokine-binding protein which shows chemokine neutralizing activity and binds to host chemokines CCL3, CCL4 and CCL18. Binds to CCL3 with 1:1 stoichiometry. The chain is Evasin-1 from Rhipicephalus sanguineus (Brown dog tick).